Here is a 662-residue protein sequence, read N- to C-terminus: 72 kDa type IV collagenase (662 aa).

A signal peptide spans 1 to 29; it reads MEARLVWGVLVGPLRVLCVLCCLLGHAIA. Residues 30–109 constitute a propeptide, activation peptide; the sequence is APSPIIKFPG…PRCGNPDVAN (80 aa). The Cysteine switch signature appears at 100–107; it reads PRCGNPDV. Zn(2+) is bound at residue cysteine 102. The collagenase-like 1 stretch occupies residues 110-221; that stretch reads YNFFPRKPKW…LWTLGEGQVV (112 aa). Aspartate 134 and aspartate 168 together coordinate Ca(2+). 2 residues coordinate Zn(2+): histidine 178 and aspartate 180. Residues aspartate 185 and glycine 186 each coordinate Ca(2+). Histidine 193 is a Zn(2+) binding site. Residues glycine 200, glycine 202, and aspartate 204 each contribute to the Ca(2+) site. Histidine 206 contacts Zn(2+). The Ca(2+) site is built by aspartate 208, aspartate 209, and glutamate 211. A collagen-binding region spans residues 222-396; it reads RVKYGNADGE…WGFCPDQGYS (175 aa). 3 Fibronectin type-II domains span residues 228–276, 286–334, and 344–392; these read ADGE…FCPH, GDGQ…FCPE, and SEGA…FCPD. 6 disulfide bridges follow: cysteine 233-cysteine 259, cysteine 247-cysteine 274, cysteine 291-cysteine 317, cysteine 305-cysteine 332, cysteine 349-cysteine 375, and cysteine 363-cysteine 390. The tract at residues 397-467 is collagenase-like 2; the sequence is LFLVAAHEFG…GPTPTLGPVT (71 aa). Residue histidine 403 coordinates Zn(2+). Glutamate 404 is a catalytic residue. Residues histidine 407 and histidine 413 each contribute to the Zn(2+) site. A required for inhibitor TIMP2 binding region spans residues 414 to 662; the sequence is SQDPGALMAP…GSIKSDWLGC (249 aa). Cysteines 471 and 662 form a disulfide. 4 Hemopexin repeats span residues 474-518, 519-565, 567-615, and 616-662; these read DIVF…WPEL, PEKI…GLPP, VQQV…WNAI, and PDNL…WLGC. The Ca(2+) site is built by aspartate 478, aspartate 523, and aspartate 571. Asparagine 575 is a glycosylation site (N-linked (GlcNAc...) asparagine). A Ca(2+)-binding site is contributed by aspartate 620. The N-linked (GlcNAc...) asparagine glycan is linked to asparagine 644.

The protein belongs to the peptidase M10A family. Interacts (via the C-terminal hemopexin-like domains-containing region) with the integrin alpha-V/beta-3; the interaction promotes vascular invasion in angiogenic vessels and melamoma cells. Interacts (via the C-terminal PEX domain) with TIMP2 (via the C-terminal); the interaction inhibits the degradation activity. Interacts with GSK3B. Ca(2+) serves as cofactor. Zn(2+) is required as a cofactor. Phosphorylation on multiple sites modulates enzymatic activity. Phosphorylated by PKC in vitro. In terms of processing, the propeptide is processed by MMP14 (MT-MMP1) and MMP16 (MT-MMP3). Autocatalytic cleavage in the C-terminal produces the anti-angiogenic peptide, PEX. This processing appears to be facilitated by binding integrin integrinv/beta3.

The protein localises to the secreted. Its subcellular location is the extracellular space. It is found in the extracellular matrix. It localises to the membrane. The protein resides in the nucleus. The enzyme catalyses Cleavage of gelatin type I and collagen types IV, V, VII, X. Cleaves the collagen-like sequence Pro-Gln-Gly-|-Ile-Ala-Gly-Gln.. In terms of biological role, ubiquitinous metalloproteinase that is involved in diverse functions such as remodeling of the vasculature, angiogenesis, tissue repair, tumor invasion, inflammation, and atherosclerotic plaque rupture. As well as degrading extracellular matrix proteins, can also act on several nonmatrix proteins such as big endothelial 1 and beta-type CGRP promoting vasoconstriction. Also cleaves KISS at a Gly-|-Leu bond. Appears to have a role in myocardial cell death pathways. Contributes to myocardial oxidative stress by regulating the activity of GSK3beta. Cleaves GSK3beta in vitro. Involved in the formation of the fibrovascular tissues. PEX, the C-terminal non-catalytic fragment of MMP2, possesses anti-angiogenic and anti-tumor properties and inhibits cell migration and cell adhesion to FGF2 and vitronectin. Ligand for integrin alpha-v/beta3 on the surface of blood vessels. The chain is 72 kDa type IV collagenase (Mmp2) from Rattus norvegicus (Rat).